Consider the following 805-residue polypeptide: Leucine--tRNA ligase (805 aa).

A 'HIGH' region motif is present at residues 40–51 (PYPSGAGLHVGH). Residues 576–580 (KMSKS) carry the 'KMSKS' region motif. ATP is bound at residue Lys-579.

This sequence belongs to the class-I aminoacyl-tRNA synthetase family.

It localises to the cytoplasm. The catalysed reaction is tRNA(Leu) + L-leucine + ATP = L-leucyl-tRNA(Leu) + AMP + diphosphate. This Brevibacillus brevis (strain 47 / JCM 6285 / NBRC 100599) protein is Leucine--tRNA ligase.